Here is a 131-residue protein sequence, read N- to C-terminus: Ribosome-binding factor A (131 aa).

It belongs to the RbfA family. Monomer. Binds 30S ribosomal subunits, but not 50S ribosomal subunits or 70S ribosomes.

Its subcellular location is the cytoplasm. Functionally, one of several proteins that assist in the late maturation steps of the functional core of the 30S ribosomal subunit. Associates with free 30S ribosomal subunits (but not with 30S subunits that are part of 70S ribosomes or polysomes). Required for efficient processing of 16S rRNA. May interact with the 5'-terminal helix region of 16S rRNA. In Mannheimia succiniciproducens (strain KCTC 0769BP / MBEL55E), this protein is Ribosome-binding factor A.